A 657-amino-acid polypeptide reads, in one-letter code: Methionine--tRNA ligase (657 aa).

The 'HIGH' region motif lies at 13–23; that stretch reads YYPSGNLHIGH. Residues 308-312 carry the 'KMSKS' region motif; sequence KMSKS. Lysine 311 contacts ATP. The 101-residue stretch at 557 to 657 folds into the tRNA-binding domain; the sequence is DFDKVEIKAA…SAIPNGAVIK (101 aa).

The protein belongs to the class-I aminoacyl-tRNA synthetase family. MetG type 2B subfamily. Homodimer.

It is found in the cytoplasm. The catalysed reaction is tRNA(Met) + L-methionine + ATP = L-methionyl-tRNA(Met) + AMP + diphosphate. Functionally, is required not only for elongation of protein synthesis but also for the initiation of all mRNA translation through initiator tRNA(fMet) aminoacylation. In Staphylococcus aureus (strain COL), this protein is Methionine--tRNA ligase.